The primary structure comprises 422 residues: L-cysteine:1D-myo-inositol 2-amino-2-deoxy-alpha-D-glucopyranoside ligase (422 aa).

Zn(2+) is bound at residue Cys43. Residues 43-46 (CGIT), Thr58, and 81-83 (NVT) contribute to the L-cysteinyl-5'-AMP site. Residues 45-55 (ITPYDATHLGH) carry the 'HIGH' region motif. A compositionally biased stretch (basic and acidic residues) spans 185–200 (AERGGDPDRPGKRNRL). The segment at 185–221 (AERGGDPDRPGKRNRLDPMLWRGRRPGEPSWPGPRGV) is disordered. A 'ERGGDP' region motif is present at residues 186–191 (ERGGDP). Trp227 is an L-cysteinyl-5'-AMP binding site. Residue Cys231 participates in Zn(2+) binding. Residue 249 to 251 (GSD) coordinates L-cysteinyl-5'-AMP. His256 contacts Zn(2+). L-cysteinyl-5'-AMP is bound at residue Ile288. The 'KMSKS' region signature appears at 294-298 (KMSKS).

Belongs to the class-I aminoacyl-tRNA synthetase family. MshC subfamily. As to quaternary structure, monomer. It depends on Zn(2+) as a cofactor.

It catalyses the reaction 1D-myo-inositol 2-amino-2-deoxy-alpha-D-glucopyranoside + L-cysteine + ATP = 1D-myo-inositol 2-(L-cysteinylamino)-2-deoxy-alpha-D-glucopyranoside + AMP + diphosphate + H(+). Catalyzes the ATP-dependent condensation of GlcN-Ins and L-cysteine to form L-Cys-GlcN-Ins. This chain is L-cysteine:1D-myo-inositol 2-amino-2-deoxy-alpha-D-glucopyranoside ligase, found in Geodermatophilus obscurus (strain ATCC 25078 / DSM 43160 / JCM 3152 / CCUG 61914 / KCC A-0152 / KCTC 9177 / NBRC 13315 / NRRL B-3577 / G-20).